Reading from the N-terminus, the 115-residue chain is Secapin (115 aa).

The signal sequence occupies residues 1–24 (MRFQVYILHLCFFILVVLTYLSQG). Positions 25–90 (QSYTTTTTTS…STENFDITNR (66 aa)) are excised as a propeptide. Residues C99 and C110 are joined by a disulfide bond.

The protein belongs to the secapin family. In terms of tissue distribution, expressed in the epidermis, fat body and venom gland.

The protein localises to the secreted. Its function is as follows. Serine protease inhibitor which exhibits antifibrinolytic, antielastolytic and antimicrobial activities. Displays antimicrobial activity against bacteria and fungi. Likely functions in the innate immune response to microbial infection and possibly in the venom, as an antifibrinolytic agent. The recombinant form inhibits trypsin (IC(50)=80.02 nM, Ki=127.25 nM), chymotrypsin (IC(50)=393.78 nM, Ki=432.59 nM), the microbial serine proteases subtilisin A (IC(50)=379.20 nM, Ki=492.77 nM) and proteinase K (IC(50)=189.43 nM, Ki=271.76 nM), plasmin (IC(50)=457.98 nM, Ki=502.91 nM), human elastase (IC(50)=347.81 nM, Ki=469.90 nM) and porcine elastase (IC(50)=94.70 nM, Ki=125.62 nM). Does not inhibit thrombin. Binds to human plasmin and inhibits the plasmin-mediated degradation of fibrin to fibrin degradation products, indicating its role as an anti-fibrinolytic agent. Also binds to bacterial and fungal surfaces. Exhibits antimicrobial activity against the Gram-positive bacteria B.thuringiensis (MIC=4.21 uM) and P.larvae (MIC=11.13 uM), the Gram-negative bacteria E.coli (MIC=6.50 uM) and the multidrug-resistant A.baumannii (MIC=5 ug/ml, MBC=10 ug/ml), as well as against the fungus B.bassiana (IC(50)=2.57 uM). The synthetic peptide also exhibits antimicrobial activity against the Gram-positive bacterium P.larvae (MIC=41.12 uM), the Gram-negative bacterium P.aeruginosa (MIC=65.75 uM), and the fungus B.bassiana (IC(50)=44.27 uM). Is also able to prevent A.baumannii biofilm formation and eliminate established A.baumannii biofilms. In vitro, does not induce an inflammatory response and has no cytotoxic activity against mammalian cells. In Apis cerana (Indian honeybee), this protein is Secapin.